The sequence spans 316 residues: MKSIVFMGTPQFAVPILKALIDSEDYQVLAVVSQPDRRVGRKRELRATPVKELALENGIEVLTPEKINHSPEMDRVIELAPDLIITAAFGQFLPDKLLAAAKVAAINVHGSLLPKYRGGAPIQYAVMNGDAETGVTIMYMVKKMDAGDIISQASLPITKQDDTGTMFEKLSLLGRDLLLDTLPKLLAGDITPVKQDESQVVFSPNITREQETIDFTLPADRIDDLVRGLRPAPVGNMVIDGLRTKVYDVTPLTETTDLQPGQVVRVEKHALIIAAGAGTTYQINSLKPAGKPKMDITDYLNGHQNLKPGVQAINND.

Ser111–Pro114 contacts (6S)-5,6,7,8-tetrahydrofolate.

It belongs to the Fmt family.

It catalyses the reaction L-methionyl-tRNA(fMet) + (6R)-10-formyltetrahydrofolate = N-formyl-L-methionyl-tRNA(fMet) + (6S)-5,6,7,8-tetrahydrofolate + H(+). In terms of biological role, attaches a formyl group to the free amino group of methionyl-tRNA(fMet). The formyl group appears to play a dual role in the initiator identity of N-formylmethionyl-tRNA by promoting its recognition by IF2 and preventing the misappropriation of this tRNA by the elongation apparatus. This Limosilactobacillus fermentum (strain NBRC 3956 / LMG 18251) (Lactobacillus fermentum) protein is Methionyl-tRNA formyltransferase.